The chain runs to 317 residues: Phosphatidylglycerol--prolipoprotein diacylglyceryl transferase 2 (317 aa).

4 helical membrane passes run isoleucine 19 to glycine 39, glycine 51 to tyrosine 71, valine 93 to isoleucine 113, and isoleucine 120 to glycine 140. Arginine 141 contacts a 1,2-diacyl-sn-glycero-3-phospho-(1'-sn-glycerol). A run of 3 helical transmembrane segments spans residues proline 180–alanine 200, phenylalanine 211–isoleucine 230, and leucine 241–alanine 261. The segment at glycine 275–serine 317 is disordered. Positions proline 299–serine 317 are enriched in polar residues.

It belongs to the Lgt family.

The protein localises to the cell membrane. It catalyses the reaction L-cysteinyl-[prolipoprotein] + a 1,2-diacyl-sn-glycero-3-phospho-(1'-sn-glycerol) = an S-1,2-diacyl-sn-glyceryl-L-cysteinyl-[prolipoprotein] + sn-glycerol 1-phosphate + H(+). The protein operates within protein modification; lipoprotein biosynthesis (diacylglyceryl transfer). Catalyzes the transfer of the diacylglyceryl group from phosphatidylglycerol to the sulfhydryl group of the N-terminal cysteine of a prolipoprotein, the first step in the formation of mature lipoproteins. The chain is Phosphatidylglycerol--prolipoprotein diacylglyceryl transferase 2 from Streptomyces coelicolor (strain ATCC BAA-471 / A3(2) / M145).